The following is a 411-amino-acid chain: Adenylosuccinate synthetase (411 aa).

Residues 11 to 17 and 39 to 41 contribute to the GTP site; these read GDEGKGK and GHT. D12 acts as the Proton acceptor in catalysis. Residues D12 and G39 each contribute to the Mg(2+) site. IMP-binding positions include 12 to 15, 37 to 40, T121, R135, Q215, T230, and R294; these read DEGK and NAGH. The active-site Proton donor is H40. 290–296 contacts substrate; it reads TTTKRPR. Residues R296, 322–324, and 400–402 each bind GTP; these read KLD and STS.

This sequence belongs to the adenylosuccinate synthetase family. Homodimer. Mg(2+) serves as cofactor.

The protein resides in the cytoplasm. The catalysed reaction is IMP + L-aspartate + GTP = N(6)-(1,2-dicarboxyethyl)-AMP + GDP + phosphate + 2 H(+). Its pathway is purine metabolism; AMP biosynthesis via de novo pathway; AMP from IMP: step 1/2. Functionally, plays an important role in the de novo pathway of purine nucleotide biosynthesis. Catalyzes the first committed step in the biosynthesis of AMP from IMP. The protein is Adenylosuccinate synthetase of Helicobacter pylori (strain Shi470).